We begin with the raw amino-acid sequence, 297 residues long: T-cell leukemia homeobox protein 1 (297 aa).

The disordered stretch occupies residues 153–174; sequence DRFTGHPYQNRTPPKKKKPRTS. Positions 168 to 227 form a DNA-binding region, homeobox; sequence KKKPRTSFTRLQICELEKRFHRQKYLASAERAALAKALKMTDAQVKTWFQNRRTKWRRQT.

It localises to the nucleus. Functionally, seems to be involved in the development of cranial sensory innervation from peripheral ganglia. The polypeptide is T-cell leukemia homeobox protein 1 (TLX1) (Gallus gallus (Chicken)).